Reading from the N-terminus, the 739-residue chain is MSLMLEPNPTQIKEERIYAEMGLTDEEFAMVEKILGRLPNYTETGLFSVMWSEHCSYKNSKPVLRKFPTTGERVLQGPGEGAGIVDIGDNQAVVFKMESHNHPSAIEPYQGAATGVGGIIRDVFSMGARPVALLNSLRFGELQSPRVKYLFEEVVAGIAGYGNCIGIPTVGGEVQFDPCYEGNPLVNAMCVGLINHEDIKKGQAHGAGNTVMYVGASTGRDGIHGATFASEELSESSEAKRPAVQVGDPFMEKLLIEACLELIQSDALVGIQDMGAAGLTSSSAEMASKAGMGIEMYLDDVPQRETGMTPYEMMLSESQERMLIVVKKGREQEIVDLFEKYGLAAVTMGKVTEDKMLRLFHKGEKVAEVPADALAEEAPIYHKPSKEAAYFAEFQAMKMETPKVENYKETLFALLQQPTIASKEWVYDQYDYQVRTSTVVTPGSDAAVVRVRGTEKGLAMTTDCNSRYIYLDPEMGGKIAVAEAARNIVCSGGEPLAITDCLNFGNPEKPEIFWQIEKSVDGMSEACRTLQTPVIGGNVSMYNERSGEAVYPTPTVGMVGLVHDLKHVTTQEFKQAGDLVYVIGETKAEFGGSELQKMIHGKIFGQSPSIDLDVELKRQKQVLEAIQAGLVQSAHDVAEGGLAVAISESAIGAKGLGATVKLDGEATAALFAESQSRFVITVKRENKEAFEKAVEAIQVGEVTSTNEVTIHNEENEVLLTANVDEMRKAWKGAIPCLLK.

Residue H54 is part of the active site. Y57 and K96 together coordinate ATP. Residue E98 coordinates Mg(2+). Residues 99 to 102 (SHNH) and R121 contribute to the substrate site. H100 acts as the Proton acceptor in catalysis. D122 contacts Mg(2+). Residue Q245 coordinates substrate. Residue D273 participates in Mg(2+) binding. Substrate is bound at residue 317-319 (ESQ). The ATP site is built by D500 and G537. N538 contributes to the Mg(2+) binding site. S540 is a binding site for substrate.

Belongs to the FGAMS family. In terms of assembly, monomer. Part of the FGAM synthase complex composed of 1 PurL, 1 PurQ and 2 PurS subunits.

Its subcellular location is the cytoplasm. The enzyme catalyses N(2)-formyl-N(1)-(5-phospho-beta-D-ribosyl)glycinamide + L-glutamine + ATP + H2O = 2-formamido-N(1)-(5-O-phospho-beta-D-ribosyl)acetamidine + L-glutamate + ADP + phosphate + H(+). It functions in the pathway purine metabolism; IMP biosynthesis via de novo pathway; 5-amino-1-(5-phospho-D-ribosyl)imidazole from N(2)-formyl-N(1)-(5-phospho-D-ribosyl)glycinamide: step 1/2. Functionally, part of the phosphoribosylformylglycinamidine synthase complex involved in the purines biosynthetic pathway. Catalyzes the ATP-dependent conversion of formylglycinamide ribonucleotide (FGAR) and glutamine to yield formylglycinamidine ribonucleotide (FGAM) and glutamate. The FGAM synthase complex is composed of three subunits. PurQ produces an ammonia molecule by converting glutamine to glutamate. PurL transfers the ammonia molecule to FGAR to form FGAM in an ATP-dependent manner. PurS interacts with PurQ and PurL and is thought to assist in the transfer of the ammonia molecule from PurQ to PurL. The chain is Phosphoribosylformylglycinamidine synthase subunit PurL from Bacillus cereus (strain B4264).